The primary structure comprises 217 residues: MGQKVHPIGMRVGIIRDWDAKWYAEKEYADYLHEDLAIRKFINKELAEASVSTIEIERAVNKVIVSLHTAKPGMVIGKGGANVDALRAQLNKLTGKQVHINIIEIKQPDLDAHLVGENIARQLEQRVAFRRAQKQAIQRTMRAGAKGIKTQVSGRLNGADIARSEGYSEGTVPLHTLRADIDYAWEEADTTYGKLGVKVWIYRGEVLPARKNTKGGK.

The region spanning Ile38–Lys106 is the KH type-2 domain.

The protein belongs to the universal ribosomal protein uS3 family. As to quaternary structure, part of the 30S ribosomal subunit. Forms a tight complex with proteins S10 and S14.

Its function is as follows. Binds the lower part of the 30S subunit head. Binds mRNA in the 70S ribosome, positioning it for translation. The polypeptide is Small ribosomal subunit protein uS3 (Streptococcus equi subsp. equi (strain 4047)).